The following is a 227-amino-acid chain: 2-C-methyl-D-erythritol 4-phosphate cytidylyltransferase (227 aa).

The protein belongs to the IspD/TarI cytidylyltransferase family. IspD subfamily.

It catalyses the reaction 2-C-methyl-D-erythritol 4-phosphate + CTP + H(+) = 4-CDP-2-C-methyl-D-erythritol + diphosphate. It participates in isoprenoid biosynthesis; isopentenyl diphosphate biosynthesis via DXP pathway; isopentenyl diphosphate from 1-deoxy-D-xylulose 5-phosphate: step 2/6. Catalyzes the formation of 4-diphosphocytidyl-2-C-methyl-D-erythritol from CTP and 2-C-methyl-D-erythritol 4-phosphate (MEP). This chain is 2-C-methyl-D-erythritol 4-phosphate cytidylyltransferase, found in Mycobacterium marinum (strain ATCC BAA-535 / M).